A 185-amino-acid polypeptide reads, in one-letter code: Keratin-associated protein 4-8 (185 aa).

Repeat copies occupy residues 14–18, 19–23, 24–28, 39–43, 44–48, 49–53, 54–58, 59–63, 64–68, 69–73, 74–78, 79–83, 84–88, 89–93, 94–98, 99–103, 104–108, 109–113, 114–118, 119–123, 124–128, 134–138, 139–143, 144–148, and 149–164. A 25 X 5 AA repeats of C-C-[IKRQVHEC]-[SPRT]-[STCVQPR] region spans residues 14–164; the sequence is GCGQDLCQET…CGRVSCHTTC (151 aa).

The protein belongs to the KRTAP type 4 family. As to quaternary structure, interacts with hair keratins. In terms of tissue distribution, expressed in the hair follicles.

In the hair cortex, hair keratin intermediate filaments are embedded in an interfilamentous matrix, consisting of hair keratin-associated proteins (KRTAP), which are essential for the formation of a rigid and resistant hair shaft through their extensive disulfide bond cross-linking with abundant cysteine residues of hair keratins. The matrix proteins include the high-sulfur and high-glycine-tyrosine keratins. The protein is Keratin-associated protein 4-8 (KRTAP4-8) of Homo sapiens (Human).